The sequence spans 323 residues: Beta-ketoacyl-[acyl-carrier-protein] synthase III (323 aa).

Catalysis depends on residues Cys-114 and His-250. The tract at residues 251-255 is ACP-binding; it reads QANIR. Residue Asn-280 is part of the active site.

It belongs to the thiolase-like superfamily. FabH family. As to quaternary structure, homodimer.

It is found in the cytoplasm. The catalysed reaction is malonyl-[ACP] + acetyl-CoA + H(+) = 3-oxobutanoyl-[ACP] + CO2 + CoA. It participates in lipid metabolism; fatty acid biosynthesis. Catalyzes the condensation reaction of fatty acid synthesis by the addition to an acyl acceptor of two carbons from malonyl-ACP. Catalyzes the first condensation reaction which initiates fatty acid synthesis and may therefore play a role in governing the total rate of fatty acid production. Possesses both acetoacetyl-ACP synthase and acetyl transacylase activities. Its substrate specificity determines the biosynthesis of branched-chain and/or straight-chain of fatty acids. The sequence is that of Beta-ketoacyl-[acyl-carrier-protein] synthase III from Ruegeria sp. (strain TM1040) (Silicibacter sp.).